The primary structure comprises 186 residues: dCTP deaminase (186 aa).

Residue Lys107–Arg112 coordinates dCTP. Glu133 serves as the catalytic Proton donor/acceptor. DCTP contacts are provided by Gln152, Tyr166, Lys175, and Gln176.

The protein belongs to the dCTP deaminase family. Homotrimer.

It carries out the reaction dCTP + H2O + H(+) = dUTP + NH4(+). The protein operates within pyrimidine metabolism; dUMP biosynthesis; dUMP from dCTP (dUTP route): step 1/2. Catalyzes the deamination of dCTP to dUTP. The protein is dCTP deaminase of Wolinella succinogenes (strain ATCC 29543 / DSM 1740 / CCUG 13145 / JCM 31913 / LMG 7466 / NCTC 11488 / FDC 602W) (Vibrio succinogenes).